Reading from the N-terminus, the 704-residue chain is Elongation factor G 1 (704 aa).

The 278-residue stretch at 8-285 (EKIRNIGISA…AVCAFLPNPK (278 aa)) folds into the tr-type G domain. Residues 17-24 (AHIDSGKT), 84-88 (DTPGH), and 138-141 (NKMD) each bind GTP.

Belongs to the TRAFAC class translation factor GTPase superfamily. Classic translation factor GTPase family. EF-G/EF-2 subfamily.

The protein localises to the cytoplasm. Its function is as follows. Catalyzes the GTP-dependent ribosomal translocation step during translation elongation. During this step, the ribosome changes from the pre-translocational (PRE) to the post-translocational (POST) state as the newly formed A-site-bound peptidyl-tRNA and P-site-bound deacylated tRNA move to the P and E sites, respectively. Catalyzes the coordinated movement of the two tRNA molecules, the mRNA and conformational changes in the ribosome. The chain is Elongation factor G 1 from Myxococcus xanthus (strain DK1622).